Reading from the N-terminus, the 140-residue chain is uncharacterized protein (140 aa).

It is found in the mitochondrion. This is an uncharacterized protein from Homo sapiens (Human).